The following is a 799-amino-acid chain: Leucine--tRNA ligase (799 aa).

The short motif at 39-50 (PYPSGAGLHMGH) is the 'HIGH' region element. The 'KMSKS' region motif lies at 575 to 579 (KMSKS). ATP is bound at residue Lys-578.

The protein belongs to the class-I aminoacyl-tRNA synthetase family.

The protein localises to the cytoplasm. It catalyses the reaction tRNA(Leu) + L-leucine + ATP = L-leucyl-tRNA(Leu) + AMP + diphosphate. The sequence is that of Leucine--tRNA ligase from Malacoplasma penetrans (strain HF-2) (Mycoplasma penetrans).